A 714-amino-acid polypeptide reads, in one-letter code: MALTAALKAQIAAWYKALQDQIPDFIPRAPQRQMIADVARTLAGEEGRHLAIEAPTGVGKTLSYLIPGIAIAREEQKTLVVSTANVALQDQIFSKDLPLLRKIIPDLRFTAAFGRGRYVCPRNLAALASSEPTQQDLLAFLDDELTPNNQEEQKRCARLKGDLDGYKWDGLRDHTDIAIDDDLWRRLSTDKASCLNRNCHYYRECPFFVARREIQEAEVVVANHALVMAAMESEAVLPEPKHLLLVLDEGHHLPDVARDALEMSAEITASWYRLQLDLFSKLVATCMEQFRPKTTPPLANPERLNAHCEEVYELIASLNAILNLYMPAAQEAEHRFAMGELPDEVMEICQRLAKLTETLRGLAESFLNDLSEKTGSHDIVRLHRVILQMNRALGMFEAQSKLWRLASMAQSSGAPVSKWATREIREGQLHVWFHCVGIRVSDQLERLLWRSVPHIIVTSATLRSLNSFSRLQEMSGLKEKAGDRFVALDSPFNHVEQGKLVIPQMRYEPTIDNEEQHIAEMAAYFREQLESKKHHGMLVLFASGRAMQRFLEHVADVRLLLLVQGDQPRYRLVELHRKRVESGERSVLVGLQSFAEGLDLKGELLTQVHIHKIAFPPIDSPVVITEGEWLKSLNRYPFEVQSLPSASFNLIQQVGRLIRSHACRGEVVIYDKRLLTKNYGQRLLNALPVFPIEQPAVPDVIVKPKAKPARRRRR.

The Helicase ATP-binding domain maps to 17-294 (ALQDQIPDFI…TCMEQFRPKT (278 aa)). Residue 54 to 61 (APTGVGKT) participates in ATP binding. Residues cysteine 120, cysteine 194, cysteine 199, and cysteine 205 each coordinate [4Fe-4S] cluster. A DEAH box motif is present at residues 248-251 (DEGH). Residues 517–698 (HIAEMAAYFR…VFPIEQPAVP (182 aa)) form the Helicase C-terminal domain.

It belongs to the helicase family. DinG subfamily. Type 1 sub-subfamily. [4Fe-4S] cluster is required as a cofactor.

The enzyme catalyses Couples ATP hydrolysis with the unwinding of duplex DNA at the replication fork by translocating in the 5'-3' direction. This creates two antiparallel DNA single strands (ssDNA). The leading ssDNA polymer is the template for DNA polymerase III holoenzyme which synthesizes a continuous strand.. It carries out the reaction ATP + H2O = ADP + phosphate + H(+). In terms of biological role, DNA-dependent ATPase and 5'-3' DNA helicase. Unwinds D-loops, R-loops, forked DNA and G-quadruplex DNA. This Salmonella typhimurium (strain LT2 / SGSC1412 / ATCC 700720) protein is ATP-dependent DNA helicase DinG.